Reading from the N-terminus, the 257-residue chain is OCIA domain-containing protein 1 (257 aa).

2 disordered regions span residues 1 to 20 and 148 to 257; these read MDSPLNDGSHHPPPHAPHPL and YSDE…SWTD. Residues 1–110 enclose the OCIA domain; it reads MDSPLNDGSH…MRLPNSHLGE (110 aa). Over residues 156 to 170 the composition is skewed to polar residues; sequence GRSTSLNLDTESRPT. Basic and acidic residues predominate over residues 204–216; sequence EDLRRRNREEYSK.

This sequence belongs to the OCIAD1 family. Interacts with STAT3 and ARF1. As to expression, expressed in all cells of the primary lymph gland lobe.

The protein resides in the endosome. Functionally, maintains stem cell potency. Involved in endocytic pathways that mediate signaling during hematopoiesis. The polypeptide is OCIA domain-containing protein 1 (asrij) (Drosophila melanogaster (Fruit fly)).